Consider the following 183-residue polypeptide: Small ribosomal subunit protein uS5 (183 aa).

Positions 11-71 (FLERVVGINR…EEAKKSFFRV (61 aa)) constitute an S5 DRBM domain.

This sequence belongs to the universal ribosomal protein uS5 family. In terms of assembly, part of the 30S ribosomal subunit. Contacts proteins S4 and S8.

Its function is as follows. With S4 and S12 plays an important role in translational accuracy. In terms of biological role, located at the back of the 30S subunit body where it stabilizes the conformation of the head with respect to the body. The polypeptide is Small ribosomal subunit protein uS5 (Micrococcus luteus (Micrococcus lysodeikticus)).